We begin with the raw amino-acid sequence, 346 residues long: Nucleoplasmin-like protein ANO39 (346 aa).

The residue at position 2 (S2) is an N-acetylserine. An N-linked (GlcNAc...) asparagine glycan is attached at N85. The segment covering 123-141 (DEEELEEDDEEEEEEDEVE) has biased composition (acidic residues). Residues 123–285 (DEEELEEDDE…KAKAKTDTKL (163 aa)) are disordered. A Phosphoserine; by CDC2 modification is found at S145. Over residues 171–180 (AKLDKDADKK) the composition is skewed to basic and acidic residues. Residues 181-247 (EDDDEEEDDE…EEEEDEDEES (67 aa)) are compositionally biased toward acidic residues. Residue N264 is glycosylated (N-linked (GlcNAc...) asparagine). A compositionally biased stretch (basic and acidic residues) spans 271 to 285 (GDNKPKAKAKTDTKL).

This sequence belongs to the nucleoplasmin family. Phosphorylation occurs in oocytes during the progression of the first meiotic M phase. No phosphorylation is observed in immature oocytes. As to expression, expressed specifically in the oocytes of the ovaries.

It localises to the nucleus. Its subcellular location is the nucleolus. The protein localises to the cytoplasm. Functionally, binds double-stranded RNA and both single-stranded and double-stranded DNA. The protein is Nucleoplasmin-like protein ANO39 of Patiria pectinifera (Starfish).